The sequence spans 494 residues: Ammonium transporter Rh type C (494 aa).

The Cytoplasmic segment spans residues 1-22; sequence MGNFIQGCKDYFSQQKNTNIRL. The helical transmembrane segment at 23 to 43 threads the bilayer; it reads TLPVVCFVWQIAMIILFGVFI. Over 44 to 74 the chain is Extracellular; sequence RYDEESDTHWVETKAHDNITSDIENDFYFRY. Residue N61 is glycosylated (N-linked (GlcNAc...) asparagine). A helical membrane pass occupies residues 75–95; it reads PSFQDVHVMIFVGFGFLMTFL. The Cytoplasmic portion of the chain corresponds to 96 to 99; it reads KRYS. Residues 100 to 120 form a helical membrane-spanning segment; it reads FGAVGFNFLIASFGLQWALLM. The Extracellular portion of the chain corresponds to 121-133; it reads QGWFHSLDPQTGK. The helical transmembrane segment at 134 to 154 threads the bilayer; the sequence is IFIGVESLINADFCVAGCLIA. The Cytoplasmic portion of the chain corresponds to 155–166; sequence YGAVLGKVSPVQ. A helical transmembrane segment spans residues 167-187; it reads LLVMTLFGVTLFAVEEYIILN. The Extracellular portion of the chain corresponds to 188–194; it reads LLHARDA. Residues 195-215 form a helical membrane-spanning segment; that stretch reads GGSMVIHTFGGYYGLTISWVL. Residues 216 to 234 are Cytoplasmic-facing; sequence YRPNLHQSKRMQGSVYHSD. A helical transmembrane segment spans residues 235-255; it reads IFAMIGTLFLWMFWPSFNSAI. The Extracellular segment spans residues 256 to 265; that stretch reads TDHGDGQHRA. A helical membrane pass occupies residues 266–286; sequence VINTYLCLASTVLTTVAISSF. Residues 287-297 are Cytoplasmic-facing; it reads SQKTGKLDMVH. Residues 298-318 traverse the membrane as a helical segment; the sequence is IQNSTLAGGVALGTAAEFMIS. P319 is a topological domain (extracellular). A helical transmembrane segment spans residues 320–340; it reads YGALIVGFLCGIISTMGYIFI. Topologically, residues 341–358 are cytoplasmic; it reads SPFLEKTLKIQDTCGIHN. The helical transmembrane segment at 359 to 379 threads the bilayer; it reads LHAMPGVIGGIVGAITAAAAS. Topologically, residues 380 to 411 are extracellular; sequence ESVYGKHALINTFDFTGDFKDRTVLTQGGYQA. The chain crosses the membrane as a helical span at residues 412-432; the sequence is AGMCVSIVFGVAGGAIVGSIL. At 433–494 the chain is on the cytoplasmic side; sequence KLPIWGDPAD…SNFSVEHCES (62 aa).

The protein belongs to the ammonium transporter (TC 2.A.49) family. Rh subfamily. As to quaternary structure, homotrimer.

Its subcellular location is the apical cell membrane. Functions as an ammonia transporter. May play a role in the elimination of ammonia in the gill. In Oncorhynchus mykiss (Rainbow trout), this protein is Ammonium transporter Rh type C (rhcg).